Here is a 605-residue protein sequence, read N- to C-terminus: NADH-ubiquinone oxidoreductase chain 5 (605 aa).

16 helical membrane-spanning segments follow: residues 11-31 (ILIT…LPPI), 49-69 (LSLT…ISSL), 77-97 (LAMS…ALFI), 120-140 (MFLL…NFFP), 141-161 (MLVG…WWHG), 178-198 (LADI…SSLD), 202-222 (FFAT…MAAM), 244-264 (VSAL…LIGM), 273-295 (GFSE…KALL), 302-322 (IIAF…GLNH), 325-345 (LAFM…LCAG), 371-391 (ASCF…TGFF), 408-425 (LWAT…IYSL), 457-477 (LALA…PIYT), 488-508 (LAAL…ISLA), and 584-604 (IKTY…IMLF).

It belongs to the complex I subunit 5 family.

It localises to the mitochondrion inner membrane. The enzyme catalyses a ubiquinone + NADH + 5 H(+)(in) = a ubiquinol + NAD(+) + 4 H(+)(out). In terms of biological role, core subunit of the mitochondrial membrane respiratory chain NADH dehydrogenase (Complex I) that is believed to belong to the minimal assembly required for catalysis. Complex I functions in the transfer of electrons from NADH to the respiratory chain. The immediate electron acceptor for the enzyme is believed to be ubiquinone. This Pelomedusa subrufa (African side-necked turtle) protein is NADH-ubiquinone oxidoreductase chain 5 (MT-ND5).